The primary structure comprises 535 residues: Bifunctional purine biosynthesis protein PurH (535 aa).

One can recognise an MGS-like domain in the interval 6–151 (TRLPIRRALI…KNHKDVAIVV (146 aa)).

Belongs to the PurH family.

The catalysed reaction is (6R)-10-formyltetrahydrofolate + 5-amino-1-(5-phospho-beta-D-ribosyl)imidazole-4-carboxamide = 5-formamido-1-(5-phospho-D-ribosyl)imidazole-4-carboxamide + (6S)-5,6,7,8-tetrahydrofolate. The enzyme catalyses IMP + H2O = 5-formamido-1-(5-phospho-D-ribosyl)imidazole-4-carboxamide. It functions in the pathway purine metabolism; IMP biosynthesis via de novo pathway; 5-formamido-1-(5-phospho-D-ribosyl)imidazole-4-carboxamide from 5-amino-1-(5-phospho-D-ribosyl)imidazole-4-carboxamide (10-formyl THF route): step 1/1. The protein operates within purine metabolism; IMP biosynthesis via de novo pathway; IMP from 5-formamido-1-(5-phospho-D-ribosyl)imidazole-4-carboxamide: step 1/1. This chain is Bifunctional purine biosynthesis protein PurH, found in Pseudomonas paraeruginosa (strain DSM 24068 / PA7) (Pseudomonas aeruginosa (strain PA7)).